Reading from the N-terminus, the 201-residue chain is Molybdenum cofactor guanylyltransferase (201 aa).

Residues 14–16 (LAG), K31, and D104 contribute to the GTP site. D104 is a Mg(2+) binding site.

It belongs to the MobA family. As to quaternary structure, monomer. Requires Mg(2+) as cofactor.

It is found in the cytoplasm. The enzyme catalyses Mo-molybdopterin + GTP + H(+) = Mo-molybdopterin guanine dinucleotide + diphosphate. In terms of biological role, transfers a GMP moiety from GTP to Mo-molybdopterin (Mo-MPT) cofactor (Moco or molybdenum cofactor) to form Mo-molybdopterin guanine dinucleotide (Mo-MGD) cofactor. This is Molybdenum cofactor guanylyltransferase from Helicobacter pylori (strain G27).